Here is a 229-residue protein sequence, read N- to C-terminus: NAD(P)H-quinone oxidoreductase subunit K, chloroplastic (229 aa).

Residues cysteine 43, cysteine 44, cysteine 108, and cysteine 139 each coordinate [4Fe-4S] cluster.

Belongs to the complex I 20 kDa subunit family. In terms of assembly, NDH is composed of at least 16 different subunits, 5 of which are encoded in the nucleus. [4Fe-4S] cluster is required as a cofactor.

It is found in the plastid. The protein resides in the chloroplast thylakoid membrane. It catalyses the reaction a plastoquinone + NADH + (n+1) H(+)(in) = a plastoquinol + NAD(+) + n H(+)(out). The catalysed reaction is a plastoquinone + NADPH + (n+1) H(+)(in) = a plastoquinol + NADP(+) + n H(+)(out). NDH shuttles electrons from NAD(P)H:plastoquinone, via FMN and iron-sulfur (Fe-S) centers, to quinones in the photosynthetic chain and possibly in a chloroplast respiratory chain. The immediate electron acceptor for the enzyme in this species is believed to be plastoquinone. Couples the redox reaction to proton translocation, and thus conserves the redox energy in a proton gradient. The sequence is that of NAD(P)H-quinone oxidoreductase subunit K, chloroplastic from Aethionema cordifolium (Lebanon stonecress).